The sequence spans 347 residues: Quinolinate synthase (347 aa).

Iminosuccinate is bound by residues histidine 47 and serine 68. Cysteine 113 is a binding site for [4Fe-4S] cluster. Residues 139–141 (YAN) and serine 156 contribute to the iminosuccinate site. Cysteine 200 lines the [4Fe-4S] cluster pocket. Iminosuccinate is bound by residues 226–228 (HPE) and threonine 243. Cysteine 297 serves as a coordination point for [4Fe-4S] cluster.

This sequence belongs to the quinolinate synthase family. Type 1 subfamily. It depends on [4Fe-4S] cluster as a cofactor.

It is found in the cytoplasm. The catalysed reaction is iminosuccinate + dihydroxyacetone phosphate = quinolinate + phosphate + 2 H2O + H(+). The protein operates within cofactor biosynthesis; NAD(+) biosynthesis; quinolinate from iminoaspartate: step 1/1. In terms of biological role, catalyzes the condensation of iminoaspartate with dihydroxyacetone phosphate to form quinolinate. The polypeptide is Quinolinate synthase (Shigella boydii serotype 18 (strain CDC 3083-94 / BS512)).